A 153-amino-acid chain; its full sequence is Protein-export protein SecB (153 aa).

Belongs to the SecB family. As to quaternary structure, homotetramer, a dimer of dimers. One homotetramer interacts with 1 SecA dimer.

It localises to the cytoplasm. In terms of biological role, one of the proteins required for the normal export of preproteins out of the cell cytoplasm. It is a molecular chaperone that binds to a subset of precursor proteins, maintaining them in a translocation-competent state. It also specifically binds to its receptor SecA. This Erwinia tasmaniensis (strain DSM 17950 / CFBP 7177 / CIP 109463 / NCPPB 4357 / Et1/99) protein is Protein-export protein SecB.